We begin with the raw amino-acid sequence, 332 residues long: Protoheme IX farnesyltransferase (332 aa).

Transmembrane regions (helical) follow at residues 63 to 83 (LICTLGGGALAAAAAGALNCL), 109 to 129 (TVFLGAVSCTLAAAMLLISGV), 132 to 152 (LAAGLTLLGLCSYVILYTIIL), 160 to 180 (IVFGGVAGAIPPLVGASAATG), 188 to 208 (WLFSLVMLWTPAHFWALAILL), 245 to 265 (ILGVFALPEGGILYLIMLLPF), and 286 to 306 (AKGLFRWSILYMFGICLLLLI).

This sequence belongs to the UbiA prenyltransferase family. Protoheme IX farnesyltransferase subfamily.

It is found in the cell inner membrane. It carries out the reaction heme b + (2E,6E)-farnesyl diphosphate + H2O = Fe(II)-heme o + diphosphate. It functions in the pathway porphyrin-containing compound metabolism; heme O biosynthesis; heme O from protoheme: step 1/1. In terms of biological role, converts heme B (protoheme IX) to heme O by substitution of the vinyl group on carbon 2 of heme B porphyrin ring with a hydroxyethyl farnesyl side group. This is Protoheme IX farnesyltransferase from Prochlorococcus marinus subsp. pastoris (strain CCMP1986 / NIES-2087 / MED4).